Here is a 508-residue protein sequence, read N- to C-terminus: MSTAPNAKNNISLKKSVGDVFRLTAKRVLMRVDFNVPMQNGHITNDYRIRAAIPTIRRVIDQGGICILLSHLGRPRGVSMVAGVRDIRRRYHEAQFHDNKGKTAFFSVLPGEEKVKILAKSSAREEATHISPEVKSGKTMLFARLPEDEKKSLLMQYLNENKDSALPQMSVSAGYEEQYSLRPVAVRLAELLGQHVYFAHDCLDARVEVSRLKRGNVMLLENVRFYSEENGENAEEREAMAKILASYGDVYISDAFGAAHRDSATMTGIPKILGHGAAGYLMEKEISYFAKVLGNPPRPLVAIVGGAKVSEKIQLLDNMLQRIDYLLIGGAMAYTFLKAQGYSIGKSKCEESKLEFARSLLKKAEDRKVQIILPIDHVCHTEFKAVDSPLITEDQNIPEGHMALDIGPKTIEKYVQTIGKCKSAIWNGPMGVFEMVPYSKGTFAIAKAMGRGTQKRGLMSIIGGGESAGAAELCGKLSISHVSTGGGASLELLEGKTLPGVAVLDDKE.

Residues Val-32, Asp-33, Phe-34, Asn-35, Arg-48, Ser-70, His-71, Gly-73, Arg-74, Arg-224, His-260, and Arg-261 each contribute to the (2R)-3-phosphoglycerate site. ADP is bound by residues Gly-306 and Ala-307. Residue Gly-306 participates in CDP binding. Positions 307 and 308 each coordinate AMP. An ATP-binding site is contributed by Ala-307. Position 307 (Ala-307) interacts with Mg(2+). Residue Lys-308 coordinates (2R)-3-phosphoglycerate. A CDP-binding site is contributed by Glu-311. A Mg(2+)-binding site is contributed by Glu-311. Residues Lys-312 and Gly-330 each coordinate ADP. AMP is bound at residue Lys-312. Residue Lys-312 coordinates ATP. Gly-330 contacts CDP. AMP-binding residues include Ala-331 and Ala-403. 2 residues coordinate ATP: Ala-331 and Ala-403. ADP is bound by residues Ala-403 and Asn-427. The CDP site is built by Gly-428 and Phe-433. The ADP site is built by Phe-433, Glu-434, Glu-466, and Ser-467. Glu-434 is a binding site for AMP. 3 residues coordinate ATP: Glu-434, Glu-466, and Ser-467. A Mg(2+)-binding site is contributed by Glu-466.

It belongs to the phosphoglycerate kinase family. Monomer. It depends on Mg(2+) as a cofactor.

It catalyses the reaction (2R)-3-phosphoglycerate + ATP = (2R)-3-phospho-glyceroyl phosphate + ADP. It participates in carbohydrate degradation; glycolysis; pyruvate from D-glyceraldehyde 3-phosphate: step 2/5. The protein is Phosphoglycerate kinase A of Trypanosoma brucei brucei.